Reading from the N-terminus, the 163-residue chain is Staphylokinase (163 aa).

An N-terminal signal peptide occupies residues 1 to 27 (MLKRSLLFLTVLLLLFSFSSITNEVSA).

Belongs to the staphylokinase family.

It localises to the secreted. In terms of biological role, potent plasminogen activator that converts plasminogen into plasmin. It forms a 1:1 complex with plasmin, which in turn activates other plasminogen molecules. This chain is Staphylokinase, found in Staphylococcus phage S phi-C (Bacteriophage S phi-C).